The sequence spans 257 residues: Ribosomal RNA small subunit methyltransferase J (257 aa).

S-adenosyl-L-methionine contacts are provided by residues arginine 107 to aspartate 108, glutamate 123 to arginine 124, and aspartate 177.

Belongs to the methyltransferase superfamily. RsmJ family.

Its subcellular location is the cytoplasm. The catalysed reaction is guanosine(1516) in 16S rRNA + S-adenosyl-L-methionine = N(2)-methylguanosine(1516) in 16S rRNA + S-adenosyl-L-homocysteine + H(+). Its function is as follows. Specifically methylates the guanosine in position 1516 of 16S rRNA. In Haemophilus influenzae (strain 86-028NP), this protein is Ribosomal RNA small subunit methyltransferase J.